A 371-amino-acid polypeptide reads, in one-letter code: Antibiotic efflux pump periplasmic linker protein ArpA (371 aa).

The N-terminal stretch at 1–22 is a signal peptide; the sequence is MQFKPAVTALVSAVALATLLSG. Cysteine 23 carries the N-palmitoyl cysteine lipid modification. Cysteine 23 carries the S-diacylglycerol cysteine lipid modification. The stretch at 115–155 forms a coiled coil; that stretch reads LAERYKQLIDEQAVSKQEYDDANAKRLQAEASLKSAQIDLR.

This sequence belongs to the membrane fusion protein (MFP) (TC 8.A.1) family.

It is found in the cell inner membrane. Functionally, the periplasmic linker protein component of an antibiotic efflux pump. Confers resistance to numerous structurally unrelated antibiotics such as carbenicillin, chloramphenicol, erythromycin, novobiocin, streptomycin and tetracycline. Is not involved in organic solvent efflux. This chain is Antibiotic efflux pump periplasmic linker protein ArpA (arpA), found in Pseudomonas putida (Arthrobacter siderocapsulatus).